The sequence spans 165 residues: Histone H1 (165 aa).

The segment at 1–165 is disordered; it reads GKQSTSKSVT…KKATKGSKKN (165 aa). Over residues 9-18 the composition is skewed to basic and acidic residues; it reads VTREKKDVKK. Over residues 20–31 the composition is skewed to basic residues; it reads VAPKKAIKKVTK. The segment covering 32–41 has biased composition (low complexity); it reads KSTTPVKTSK. 2 positions are modified to phosphothreonine: Thr-48 and Thr-54. Over residues 68–89 the composition is skewed to basic and acidic residues; the sequence is TMKESVSDAKKTVHKSAGDKKL. Residue Ser-83 is modified to Phosphoserine. Residues 103–117 are compositionally biased toward basic residues; that stretch reads KIVHPAKKAAAKPKT. Position 117 is a phosphothreonine (Thr-117). The span at 118–157 shows a compositional bias: basic and acidic residues; the sequence is AKKEVKKDTKPVKKDAKKDTKPVKKDAKKDTKPAKKDTKK.

Post-translationally, cell-growth/division-associated phosphorylation by a CDC2-like kinase. Is additionally phosphorylated on either Ser-33, Thr-34 or Thr-35, and on either Thr-39 or Ser-40.

It is found in the nucleus. Its subcellular location is the chromosome. Functionally, histones H1 are necessary for the condensation of nucleosome chains into higher-order structures. The polypeptide is Histone H1 (HHO) (Tetrahymena pyriformis).